The primary structure comprises 621 residues: 1-deoxy-D-xylulose-5-phosphate synthase (621 aa).

Thiamine diphosphate is bound by residues H80 and 121–123; that span reads GHS. A Mg(2+)-binding site is contributed by D152. Thiamine diphosphate is bound by residues 153 to 154, N181, Y288, and E370; that span reads GA. Mg(2+) is bound at residue N181.

This sequence belongs to the transketolase family. DXPS subfamily. In terms of assembly, homodimer. Requires Mg(2+) as cofactor. The cofactor is thiamine diphosphate.

It carries out the reaction D-glyceraldehyde 3-phosphate + pyruvate + H(+) = 1-deoxy-D-xylulose 5-phosphate + CO2. It participates in metabolic intermediate biosynthesis; 1-deoxy-D-xylulose 5-phosphate biosynthesis; 1-deoxy-D-xylulose 5-phosphate from D-glyceraldehyde 3-phosphate and pyruvate: step 1/1. Catalyzes the acyloin condensation reaction between C atoms 2 and 3 of pyruvate and glyceraldehyde 3-phosphate to yield 1-deoxy-D-xylulose-5-phosphate (DXP). This Aeromonas hydrophila subsp. hydrophila (strain ATCC 7966 / DSM 30187 / BCRC 13018 / CCUG 14551 / JCM 1027 / KCTC 2358 / NCIMB 9240 / NCTC 8049) protein is 1-deoxy-D-xylulose-5-phosphate synthase.